The primary structure comprises 582 residues: ATP-dependent lipid A-core flippase (582 aa).

5 helical membrane passes run 16–36, 69–89, 153–173, 250–270, and 275–295; these read LWPH…ALVI, FIIL…GYCM, IIGL…VLVV, LANP…LYLA, and IKET…FGLL. Residues 29 to 310 enclose the ABC transmembrane type-1 domain; the sequence is VAVVALVINA…LTSVTSDFQR (282 aa). An ABC transporter domain is found at 342–578; it reads IKVDNVTFTY…DGAYAQLHRI (237 aa). 376–383 lines the ATP pocket; the sequence is GRSGSGKS.

The protein belongs to the ABC transporter superfamily. Lipid exporter (TC 3.A.1.106) family. Homodimer.

It localises to the cell inner membrane. The enzyme catalyses ATP + H2O + lipid A-core oligosaccharideSide 1 = ADP + phosphate + lipid A-core oligosaccharideSide 2.. Involved in lipopolysaccharide (LPS) biosynthesis. Translocates lipid A-core from the inner to the outer leaflet of the inner membrane. Transmembrane domains (TMD) form a pore in the inner membrane and the ATP-binding domain (NBD) is responsible for energy generation. This chain is ATP-dependent lipid A-core flippase, found in Aliivibrio fischeri (strain ATCC 700601 / ES114) (Vibrio fischeri).